Here is a 216-residue protein sequence, read N- to C-terminus: Soluble inorganic pyrophosphatase 5 (216 aa).

Residues M1–P20 form a disordered region. Residues T8 to P20 are compositionally biased toward polar residues. Substrate is bound by residues K66 and R80. Y88 serves as the catalytic Proton donor. Residue Y92 coordinates substrate. Residues D102, D107, and D139 each coordinate Mg(2+). Y176 contacts substrate.

Belongs to the PPase family. The cofactor is Mg(2+).

It localises to the cytoplasm. The enzyme catalyses diphosphate + H2O = 2 phosphate + H(+). The protein is Soluble inorganic pyrophosphatase 5 of Arabidopsis thaliana (Mouse-ear cress).